The following is a 421-amino-acid chain: NADH-dependent phenylglyoxylate dehydrogenase subunit epsilon (421 aa).

FAD is bound by residues 15-18 (SSHA), 39-40 (TR), and 279-297 (ATAQ…NAIL).

It belongs to the FAD-dependent oxidoreductase family. Dimer of heteropentamers composed of an alpha (PadG), a beta (PadI), a gamma (PadE), a delta (PadF) and an epsilon (PadH) subunit. It depends on FAD as a cofactor.

The enzyme catalyses phenylglyoxylate + NAD(+) + CoA = benzoyl-CoA + CO2 + NADH. Activated by magnesium ions and thiamine diphosphate. Involved in the anaerobic metabolism of phenylalanine and phenylacetate. Catalyzes the oxidative decarboxylation of phenylglyoxylate to benzoyl-CoA and CO(2). It can also react slowly with 2-oxo-3-methylbutanoate and use different electron acceptors such as benzyl viologen, methyl viologen, FAD or FMN, but NAD seems to be the physiological electron acceptor. Also catalyzes an isotope exchange between CO(2) and the carboxyl group which proves partial or complete reversibility of the oxidative decarboxylation reaction. The protein is NADH-dependent phenylglyoxylate dehydrogenase subunit epsilon (padH) of Aromatoleum evansii (Azoarcus evansii).